Here is a 506-residue protein sequence, read N- to C-terminus: bZIP transcription factor TGA10 (506 aa).

Disordered regions lie at residues 22-50 (VSYM…HQHH) and 113-218 (PSSI…KTLR). Polar residues-rich tracts occupy residues 25–45 (MDSS…SFGG), 113–124 (PSSIQEQRQNSG), 142–152 (PSTTNKMNTGL), and 160–180 (SKRS…NDAP). Over residues 207–216 (DAPKTPDPKT) the composition is skewed to basic and acidic residues. One can recognise a bZIP domain in the interval 213-257 (DPKTLRRLAQNREAARKSRLRKKAYVQQLESSRIRLTQLEQELQR). Positions 215 to 235 (KTLRRLAQNREAARKSRLRKK) are basic motif. A Nuclear localization signal motif is present at residues 217–224 (LRRLAQNR). The tract at residues 241-255 (LESSRIRLTQLEQEL) is leucine-zipper. The DOG1 domain occupies 288–502 (AAVFDMEYAR…RALSSLWHAR (215 aa)).

Belongs to the bZIP family. As to quaternary structure, binds DNA as a dimer. Interacts with TGA2.2. As to expression, specifically expressed in roots.

It is found in the nucleus. Its function is as follows. Transcription activator that binds to as1-like elements (5'-TGACGTAAgggaTGACGCA-3') in promoters of target genes. Regulates transcription in response to plant signaling molecules salicylic acid (SA), methyl jasmonate (MJ) and auxin (2,4D) only in leaves. Prevents lateral branching and may repress defense signaling. The chain is bZIP transcription factor TGA10 from Nicotiana tabacum (Common tobacco).